A 156-amino-acid chain; its full sequence is Snaclec A6 (156 aa).

The first 23 residues, 1-23 (MGRSISVSFGLLVVFLSLSGTGA), serve as a signal peptide directing secretion. 3 cysteine pairs are disulfide-bonded: C27-C38, C55-C154, and C129-C146. The region spanning 34–155 (HEGHCYKVFN…CGKPYRFTCE (122 aa)) is the C-type lectin domain.

This sequence belongs to the snaclec family. Heterodimer; disulfide-linked. Expressed by the venom gland.

It is found in the secreted. In terms of biological role, interferes with one step of hemostasis (modulation of platelet aggregation, or coagulation cascade, for example). The polypeptide is Snaclec A6 (Macrovipera lebetinus (Levantine viper)).